The sequence spans 214 residues: Large ribosomal subunit protein uL3 (214 aa).

Gln151 bears the N5-methylglutamine mark.

It belongs to the universal ribosomal protein uL3 family. As to quaternary structure, part of the 50S ribosomal subunit. Forms a cluster with proteins L14 and L19. In terms of processing, methylated by PrmB.

One of the primary rRNA binding proteins, it binds directly near the 3'-end of the 23S rRNA, where it nucleates assembly of the 50S subunit. The protein is Large ribosomal subunit protein uL3 of Magnetococcus marinus (strain ATCC BAA-1437 / JCM 17883 / MC-1).